A 122-amino-acid polypeptide reads, in one-letter code: Large ribosomal subunit protein uL14c (122 aa).

The protein belongs to the universal ribosomal protein uL14 family. As to quaternary structure, part of the 50S ribosomal subunit.

The protein resides in the plastid. It is found in the chloroplast. Binds to 23S rRNA. The protein is Large ribosomal subunit protein uL14c of Lepidium virginicum (Virginia pepperweed).